Here is a 310-residue protein sequence, read N- to C-terminus: Proline iminopeptidase (310 aa).

Residues 33–290 (PVIFLHGGPG…RVVQAGHRAF (258 aa)) form the AB hydrolase-1 domain. Serine 107 serves as the catalytic Nucleophile. Aspartate 260 is an active-site residue. Catalysis depends on histidine 287, which acts as the Proton donor.

The protein belongs to the peptidase S33 family.

The protein resides in the cytoplasm. It catalyses the reaction Release of N-terminal proline from a peptide.. Its function is as follows. Specifically catalyzes the removal of N-terminal proline residues from peptides. This is Proline iminopeptidase (pip) from Neisseria meningitidis serogroup A / serotype 4A (strain DSM 15465 / Z2491).